Here is a 145-residue protein sequence, read N- to C-terminus: Deoxyuridine 5'-triphosphate nucleotidohydrolase (145 aa).

Substrate-binding positions include 63-65, Asn-76, 80-82, and Lys-90; these read RSG and TID.

The protein belongs to the dUTPase family. Mg(2+) is required as a cofactor.

The enzyme catalyses dUTP + H2O = dUMP + diphosphate + H(+). Its pathway is pyrimidine metabolism; dUMP biosynthesis; dUMP from dCTP (dUTP route): step 2/2. Its function is as follows. This enzyme is involved in nucleotide metabolism: it produces dUMP, the immediate precursor of thymidine nucleotides and it decreases the intracellular concentration of dUTP so that uracil cannot be incorporated into DNA. The sequence is that of Deoxyuridine 5'-triphosphate nucleotidohydrolase from Clostridium acetobutylicum (strain ATCC 824 / DSM 792 / JCM 1419 / IAM 19013 / LMG 5710 / NBRC 13948 / NRRL B-527 / VKM B-1787 / 2291 / W).